The chain runs to 1174 residues: ATP-dependent DNA helicase SRS2 (1174 aa).

Residues 14-316 enclose the UvrD-like helicase ATP-binding domain; it reads QLNTQQRAAA…IILVENYRSS (303 aa). 38 to 43 contributes to the ATP binding site; it reads GTGKTK. A leucine-zipper region spans residues 222–243; that stretch reads LLMYTFRLLTRVRVLSNIKHVL. Residue arginine 314 coordinates ATP. One can recognise a UvrD-like helicase C-terminal domain in the interval 317–654; it reads QKILNTSEIL…TISTIHGAKG (338 aa). Residues 676–704 are disordered; that stretch reads DDKKDESEEDEEEDQENSKKDASPKKTRV. Serine 833 is subject to Phosphoserine. 3 disordered regions span residues 865 to 896, 909 to 973, and 994 to 1024; these read SKIN…SPTK, NVPS…DKVT, and ELHP…SNSD. Composition is skewed to polar residues over residues 909–922 and 935–955; these read NVPS…STGK and TDIS…NKTS. The segment covering 956 to 973 has biased composition (basic and acidic residues); sequence HMSDDLMRPSPTRKDKVT. The span at 1007-1023 shows a compositional bias: low complexity; sequence SLTSSEFSGFSSACSNS.

It belongs to the helicase family. UvrD subfamily.

It localises to the nucleus. It carries out the reaction Couples ATP hydrolysis with the unwinding of duplex DNA by translocating in the 3'-5' direction.. It catalyses the reaction ATP + H2O = ADP + phosphate + H(+). In terms of biological role, ATP-dependent DNA helicase involved in DNA repair at least for UV-induced lesions. The polarity of the helicase activity was determined to be 3' to 5'. The protein is ATP-dependent DNA helicase SRS2 (SRS2) of Saccharomyces cerevisiae (strain ATCC 204508 / S288c) (Baker's yeast).